The chain runs to 106 residues: UPF0122 protein Exig_1902 (106 aa).

The protein belongs to the UPF0122 family.

In terms of biological role, might take part in the signal recognition particle (SRP) pathway. This is inferred from the conservation of its genetic proximity to ftsY/ffh. May be a regulatory protein. This chain is UPF0122 protein Exig_1902, found in Exiguobacterium sibiricum (strain DSM 17290 / CCUG 55495 / CIP 109462 / JCM 13490 / 255-15).